Reading from the N-terminus, the 118-residue chain is Small ribosomal subunit protein uS13 (118 aa).

The tract at residues 93-118 (RNLPVRGQRSKTNARTRKGPRKPIKR) is disordered.

It belongs to the universal ribosomal protein uS13 family. In terms of assembly, part of the 30S ribosomal subunit. Forms a loose heterodimer with protein S19. Forms two bridges to the 50S subunit in the 70S ribosome.

Functionally, located at the top of the head of the 30S subunit, it contacts several helices of the 16S rRNA. In the 70S ribosome it contacts the 23S rRNA (bridge B1a) and protein L5 of the 50S subunit (bridge B1b), connecting the 2 subunits; these bridges are implicated in subunit movement. Contacts the tRNAs in the A and P-sites. The chain is Small ribosomal subunit protein uS13 from Saccharophagus degradans (strain 2-40 / ATCC 43961 / DSM 17024).